We begin with the raw amino-acid sequence, 114 residues long: Probable 4-amino-4-deoxy-L-arabinose-phosphoundecaprenol flippase subunit ArnE (114 aa).

Transmembrane regions (helical) follow at residues 41-61 (PWLI…IYLL), 64-84 (LPLS…LIGS), and 94-114 (YHNW…GGLL). The region spanning 53–112 (GMLLWIYLLQRLPLSMAYPMLSINLVLVLIGSRLFFHEQISYHNWLGAGAIIIGALLLGG) is the EamA domain.

The protein belongs to the ArnE family. Heterodimer of ArnE and ArnF.

It is found in the cell inner membrane. It participates in bacterial outer membrane biogenesis; lipopolysaccharide biosynthesis. Translocates 4-amino-4-deoxy-L-arabinose-phosphoundecaprenol (alpha-L-Ara4N-phosphoundecaprenol) from the cytoplasmic to the periplasmic side of the inner membrane. This is Probable 4-amino-4-deoxy-L-arabinose-phosphoundecaprenol flippase subunit ArnE from Aeromonas salmonicida (strain A449).